A 119-amino-acid chain; its full sequence is Protein phosphatase EYA4 (119 aa).

The protein belongs to the HAD-like hydrolase superfamily. EYA family. Requires Mg(2+) as cofactor.

The protein localises to the cytoplasm. The protein resides in the nucleus. It carries out the reaction O-phospho-L-tyrosyl-[protein] + H2O = L-tyrosyl-[protein] + phosphate. In terms of biological role, tyrosine phosphatase that specifically dephosphorylates 'Tyr-142' of histone H2AX (H2AXY142ph). 'Tyr-142' phosphorylation of histone H2AX plays a central role in DNA repair and acts as a mark that distinguishes between apoptotic and repair responses to genotoxic stress. Promotes efficient DNA repair by dephosphorylating H2AX, promoting the recruitment of DNA repair complexes containing MDC1. Its function as histone phosphatase probably explains its role in transcription regulation during organogenesis. May be involved in development of the eye. The chain is Protein phosphatase EYA4 (EYA4) from Gallus gallus (Chicken).